The sequence spans 1343 residues: DNA-directed RNA polymerase subunit beta (1343 aa).

Belongs to the RNA polymerase beta chain family. As to quaternary structure, the RNAP catalytic core consists of 2 alpha, 1 beta, 1 beta' and 1 omega subunit. When a sigma factor is associated with the core the holoenzyme is formed, which can initiate transcription.

The enzyme catalyses RNA(n) + a ribonucleoside 5'-triphosphate = RNA(n+1) + diphosphate. Its function is as follows. DNA-dependent RNA polymerase catalyzes the transcription of DNA into RNA using the four ribonucleoside triphosphates as substrates. This chain is DNA-directed RNA polymerase subunit beta, found in Shewanella baltica (strain OS223).